The following is a 249-amino-acid chain: GTP cyclohydrolase 1 type 2 homolog (249 aa).

A divalent metal cation contacts are provided by His-64, His-65, Asp-102, His-217, and Glu-221.

The protein belongs to the GTP cyclohydrolase I type 2/NIF3 family. In terms of assembly, homohexamer.

This Neisseria meningitidis serogroup A / serotype 4A (strain DSM 15465 / Z2491) protein is GTP cyclohydrolase 1 type 2 homolog.